A 70-amino-acid polypeptide reads, in one-letter code: uncharacterized protein (70 aa).

2 helical membrane-spanning segments follow: residues 19–39 (VIAL…VVGL) and 40–60 (LFKL…VRKF).

The protein localises to the cell membrane. This is an uncharacterized protein from Streptomyces coelicolor (strain ATCC BAA-471 / A3(2) / M145).